Consider the following 49-residue polypeptide: Chitin-binding lectin (49 aa).

The 44-residue stretch at 2–45 folds into the Chitin-binding type-1 domain; the sequence is DHRCGREATPPGKLCNDGRCCSQWGWCGTTQAYCSGKCQSQCDC. 4 cysteine pairs are disulfide-bonded: Cys-5/Cys-22, Cys-16/Cys-28, Cys-21/Cys-35, and Cys-39/Cys-43.

In terms of assembly, homodimer; disulfide-linked.

Chitin-binding lectin which is specific for N-acetylglucosamine oligomers. In Viscum album (European mistletoe), this protein is Chitin-binding lectin.